Reading from the N-terminus, the 133-residue chain is Nickel-responsive regulator (133 aa).

Residues His-76, His-87, His-89, and Cys-95 each contribute to the Ni(2+) site.

This sequence belongs to the transcriptional regulatory CopG/NikR family. In terms of assembly, homotetramer. It depends on Ni(2+) as a cofactor.

Transcriptional repressor of the nikABCDE operon. Is active in the presence of excessive concentrations of intracellular nickel. The chain is Nickel-responsive regulator from Salmonella choleraesuis (strain SC-B67).